Reading from the N-terminus, the 560-residue chain is Dihydroxy-acid dehydratase (560 aa).

Residue Asp80 coordinates Mg(2+). Residue Cys121 coordinates [2Fe-2S] cluster. Residues Asp122 and Lys123 each contribute to the Mg(2+) site. Lys123 is subject to N6-carboxylysine. Cys194 is a [2Fe-2S] cluster binding site. Glu447 is a Mg(2+) binding site. Ser473 (proton acceptor) is an active-site residue.

It belongs to the IlvD/Edd family. As to quaternary structure, homodimer. Requires [2Fe-2S] cluster as cofactor. It depends on Mg(2+) as a cofactor.

The catalysed reaction is (2R)-2,3-dihydroxy-3-methylbutanoate = 3-methyl-2-oxobutanoate + H2O. It carries out the reaction (2R,3R)-2,3-dihydroxy-3-methylpentanoate = (S)-3-methyl-2-oxopentanoate + H2O. It participates in amino-acid biosynthesis; L-isoleucine biosynthesis; L-isoleucine from 2-oxobutanoate: step 3/4. The protein operates within amino-acid biosynthesis; L-valine biosynthesis; L-valine from pyruvate: step 3/4. Functions in the biosynthesis of branched-chain amino acids. Catalyzes the dehydration of (2R,3R)-2,3-dihydroxy-3-methylpentanoate (2,3-dihydroxy-3-methylvalerate) into 2-oxo-3-methylpentanoate (2-oxo-3-methylvalerate) and of (2R)-2,3-dihydroxy-3-methylbutanoate (2,3-dihydroxyisovalerate) into 2-oxo-3-methylbutanoate (2-oxoisovalerate), the penultimate precursor to L-isoleucine and L-valine, respectively. The chain is Dihydroxy-acid dehydratase from Chlorobaculum parvum (strain DSM 263 / NCIMB 8327) (Chlorobium vibrioforme subsp. thiosulfatophilum).